We begin with the raw amino-acid sequence, 126 residues long: Large ribosomal subunit protein bL20 (126 aa).

Residues 1 to 15 show a composition bias toward basic residues; the sequence is MARVKRAVNAQKKRR. The disordered stretch occupies residues 1–20; sequence MARVKRAVNAQKKRRTTLER.

It belongs to the bacterial ribosomal protein bL20 family.

In terms of biological role, binds directly to 23S ribosomal RNA and is necessary for the in vitro assembly process of the 50S ribosomal subunit. It is not involved in the protein synthesizing functions of that subunit. The polypeptide is Large ribosomal subunit protein bL20 (Beutenbergia cavernae (strain ATCC BAA-8 / DSM 12333 / CCUG 43141 / JCM 11478 / NBRC 16432 / NCIMB 13614 / HKI 0122)).